The sequence spans 147 residues: Large ribosomal subunit protein bL9 (147 aa).

This sequence belongs to the bacterial ribosomal protein bL9 family.

Its function is as follows. Binds to the 23S rRNA. The chain is Large ribosomal subunit protein bL9 from Clostridium novyi (strain NT).